The following is a 250-amino-acid chain: MGACRIQYILLVFLLIASHWTLVQNIYCEVSRTLSLEDNPSGTFNWTSKAEKCNPGEFCQETVLLIKAEGTKTAILASKSCVPQGAETMTFVQYTAPPGLVAISYSNYCNDSLCNNRNNLASILQAPEPTATSNMSGARHCPTCLALEPCSSAPSMPCANGTTQCYHGKIELSGGGMDSVVHVKGCTTAIGCRLMAKMESVGPMTVKETCSYQSFLHPRMAEIGASWMPTSLWVLELLLPALSLPLIYFP.

Positions 1-25 (MGACRIQYILLVFLLIASHWTLVQN) are cleaved as a signal peptide. N-linked (GlcNAc...) asparagine glycosylation is found at Asn-45, Asn-110, Asn-134, and Asn-160. A UPAR/Ly6 domain is found at 141-215 (CPTCLALEPC…VKETCSYQSF (75 aa)). A lipid anchor (GPI-anchor amidated glycine) is attached at Gly-224. Positions 225 to 250 (ASWMPTSLWVLELLLPALSLPLIYFP) are cleaved as a propeptide — removed in mature form.

In terms of assembly, interacts with VAMP3. Interacts with LY6K. Interacts with DPEP3; co-localized on the cell surface of spermatocytes, spermatids, and testicular spermatozoa, co-localized only in cytoplasmic droplets of caput and corpus epididymal sperm. Interacts with ADAM5. In terms of processing, N-glycosylated; by high mannose and/or biantennary complex and/or certain types of hybrid oligosaccharides; possesses different oligosaccharides chains according to its subcellular localization in the testis. Sheds from membrane raft by ACE and released from the cell surface of epididymal sperm while it passes through the caput epididymis leading to disappearance of TEX101 on spermatozoa; is essential to produce fertile spermatozoa. As to expression, detected in testis.

Its subcellular location is the cell membrane. The protein localises to the membrane raft. It is found in the cytoplasmic vesicle. The protein resides in the secretory vesicle. It localises to the acrosome. Its subcellular location is the secreted. Functionally, plays a role in fertilization by controlling binding of sperm to zona pellucida and migration of spermatozoa into the oviduct. May play a role in signal transduction and promote protein tyrosine phosphorylation. In Rattus norvegicus (Rat), this protein is Testis-expressed protein 101.